Here is a 2551-residue protein sequence, read N- to C-terminus: Probable polyketide synthase 13 (2551 aa).

The 425-residue stretch at 10-434 folds into the Ketosynthase family 3 (KS3) domain; sequence ENDVAIIGIG…GSNCCLILSQ (425 aa). Active-site for beta-ketoacyl synthase activity residues include Cys176, His317, and His358. Positions 621 to 654 are acyl/malonyl transferase; that stretch reads GIEVSFIIGHSLGEIPAAYCSGMINIDTLCYLIY. Residue Ser631 is the For acyl/malonyl transferase activity of the active site. Positions 928–1057 are N-terminal hotdog fold; that stretch reads TDNLGYLNEN…GDFQLSNHSS (130 aa). Residues 928-1226 form the PKS/mFAS DH domain; sequence TDNLGYLNEN…CTSLTPIKES (299 aa). The active-site Proton acceptor; for dehydratase activity is the His961. The segment at 1076-1226 is C-terminal hotdog fold; the sequence is NLTKLSRDEL…CTSLTPIKES (151 aa). Asp1136 (proton donor; for dehydratase activity) is an active-site residue. The Carrier domain occupies 2465-2542; sequence DCQTIIKDSF…SSIQYTINSF (78 aa). Position 2502 is an O-(pantetheine 4'-phosphoryl)serine (Ser2502).

Pantetheine 4'-phosphate is required as a cofactor.

Functionally, probable polyketide synthase. The polypeptide is Probable polyketide synthase 13 (pks13) (Dictyostelium discoideum (Social amoeba)).